We begin with the raw amino-acid sequence, 333 residues long: tRNA U34 carboxymethyltransferase (333 aa).

Residues Lys-97, Trp-111, Lys-116, Gly-136, 158 to 160, 189 to 190, Met-205, Tyr-209, and Arg-324 contribute to the carboxy-S-adenosyl-L-methionine site; these read DPS and IE.

The protein belongs to the class I-like SAM-binding methyltransferase superfamily. CmoB family. Homotetramer.

It carries out the reaction carboxy-S-adenosyl-L-methionine + 5-hydroxyuridine(34) in tRNA = 5-carboxymethoxyuridine(34) in tRNA + S-adenosyl-L-homocysteine + H(+). Catalyzes carboxymethyl transfer from carboxy-S-adenosyl-L-methionine (Cx-SAM) to 5-hydroxyuridine (ho5U) to form 5-carboxymethoxyuridine (cmo5U) at position 34 in tRNAs. This is tRNA U34 carboxymethyltransferase from Chromohalobacter salexigens (strain ATCC BAA-138 / DSM 3043 / CIP 106854 / NCIMB 13768 / 1H11).